Here is a 281-residue protein sequence, read N- to C-terminus: Cardosin-F (281 aa).

Positions 18–278 (YYGEIGIGTP…DYGNLLVGFA (261 aa)) constitute a Peptidase A1 domain. Residue aspartate 36 is part of the active site. An intrachain disulfide couples cysteine 181 to cysteine 185. The active site involves aspartate 190. An N-linked (GlcNAc...) asparagine glycan is attached at asparagine 213.

This sequence belongs to the peptidase A1 family. As to quaternary structure, heterodimer of a light chain and a heavy chain. An intermediate form is produced first, and undergoes proteolytic processing to remove the internal plant-specific insert (PSI) and the propeptide. N-glycosylated. Pistils.

The protein localises to the microsome membrane. The protein resides in the protein storage vacuole. It is found in the secreted. Its subcellular location is the cell wall. It localises to the extracellular space. The protein localises to the extracellular matrix. With respect to regulation, inhibited by pepstatin. Its function is as follows. Aspartic protease with a high preference for bonds between hydrophobic residues. The protein is Cardosin-F of Cynara cardunculus (Cardoon).